The following is a 239-amino-acid chain: 1-(5-phosphoribosyl)-5-[(5-phosphoribosylamino)methylideneamino] imidazole-4-carboxamide isomerase (239 aa).

The active-site Proton acceptor is D9. Residue D131 is the Proton donor of the active site.

This sequence belongs to the HisA/HisF family.

The protein localises to the cytoplasm. The enzyme catalyses 1-(5-phospho-beta-D-ribosyl)-5-[(5-phospho-beta-D-ribosylamino)methylideneamino]imidazole-4-carboxamide = 5-[(5-phospho-1-deoxy-D-ribulos-1-ylimino)methylamino]-1-(5-phospho-beta-D-ribosyl)imidazole-4-carboxamide. The protein operates within amino-acid biosynthesis; L-histidine biosynthesis; L-histidine from 5-phospho-alpha-D-ribose 1-diphosphate: step 4/9. The protein is 1-(5-phosphoribosyl)-5-[(5-phosphoribosylamino)methylideneamino] imidazole-4-carboxamide isomerase of Parabacteroides distasonis (strain ATCC 8503 / DSM 20701 / CIP 104284 / JCM 5825 / NCTC 11152).